A 146-amino-acid polypeptide reads, in one-letter code: Acidic phospholipase A2 S13-69J (146 aa).

The N-terminal stretch at 1-19 is a signal peptide; that stretch reads MYPAHLLVLLAVCVSLLGA. Positions 20–27 are excised as a propeptide; it reads ASIPPQPL. Cystine bridges form between Cys38/Cys98, Cys54/Cys145, Cys56/Cys72, Cys71/Cys126, Cys78/Cys119, Cys87/Cys112, and Cys105/Cys117. Ca(2+) is bound by residues Tyr55, Gly57, and Gly59. His75 is an active-site residue. Asp76 provides a ligand contact to Ca(2+). The active site involves Asp120.

The protein belongs to the phospholipase A2 family. Group I subfamily. D49 sub-subfamily. The cofactor is Ca(2+). Expressed by the venom gland.

Its subcellular location is the secreted. The enzyme catalyses a 1,2-diacyl-sn-glycero-3-phosphocholine + H2O = a 1-acyl-sn-glycero-3-phosphocholine + a fatty acid + H(+). Its function is as follows. Snake venom phospholipase A2 (PLA2) that inhibits collagen-induced platelet aggregation. PLA2 catalyzes the calcium-dependent hydrolysis of the 2-acyl groups in 3-sn-phosphoglycerides. This chain is Acidic phospholipase A2 S13-69J, found in Austrelaps superbus (Lowland copperhead snake).